Reading from the N-terminus, the 37-residue chain is Esculentin-2Ra (37 aa).

Residues Cys31 and Cys37 are joined by a disulfide bond.

As to expression, expressed by the skin glands.

It is found in the secreted. Functionally, antimicrobial peptide. This is Esculentin-2Ra from Pelophylax ridibundus (Marsh frog).